The following is a 198-amino-acid chain: Ribonuclease HII (198 aa).

The region spanning 10–198 (QLVAGVDEVG…PVKRALGLAS (189 aa)) is the RNase H type-2 domain. Residues aspartate 16, glutamate 17, and aspartate 108 each coordinate a divalent metal cation.

It belongs to the RNase HII family. Requires Mn(2+) as cofactor. Mg(2+) serves as cofactor.

Its subcellular location is the cytoplasm. The enzyme catalyses Endonucleolytic cleavage to 5'-phosphomonoester.. Endonuclease that specifically degrades the RNA of RNA-DNA hybrids. The polypeptide is Ribonuclease HII (Shigella boydii serotype 18 (strain CDC 3083-94 / BS512)).